We begin with the raw amino-acid sequence, 430 residues long: MKLITILLLCSRLLPSLAQEEGAQEMDCNDETVFQAVDTALKKYNAELESGNQFLLYRVTEGTKKDGAETLYSFKYQIKEGNCSVQSGLTWQDCDFKDAEEAATGECTTTLGKKENKFSVATQICNITPGKGPKKTEEDLCVGCFQPIPMDSSDLKPVLKHAVEHFNNNTKHTHLFALTEVKSAHSQVVAGMNYKIIYSIVQTNCSKEDFPFLREDCVPLPYGDHGECRGHTYVDIHNTIAGFSQSCDLYPGDDLFSLLPKKCFGCPKNIPVDSPELKEALGHSIAQLNAQHNHLFYFKIDTVKKATSQVVAGTKYVIEFIARETNCSKQTNTELTADCETKHLGQSLNCNANVYMRPWENKVVPTVRCQALDMMISRPPGFSPFRLVQVQETKEGTTRLLNSCEYKGRLSKAGAGPAPDHQAEASTVTP.

The first 18 residues, 1-18 (MKLITILLLCSRLLPSLA), serve as a signal peptide directing secretion. Gln-19 carries the post-translational modification Pyrrolidone carboxylic acid. In terms of domain architecture, Cystatin kininogen-type 1 spans 28–131 (CNDETVFQAV…TQICNITPGK (104 aa)). Cystine bridges form between Cys-28/Cys-404, Cys-83/Cys-94, Cys-107/Cys-125, Cys-141/Cys-144, Cys-205/Cys-217, Cys-228/Cys-247, Cys-263/Cys-266, Cys-327/Cys-339, and Cys-350/Cys-369. N-linked (GlcNAc...) asparagine glycosylation occurs at Asn-82. The Cystatin kininogen-type 2 domain maps to 150-253 (MDSSDLKPVL…SQSCDLYPGD (104 aa)). N-linked (GlcNAc...) asparagine glycans are attached at residues Asn-168 and Asn-204. The region spanning 272 to 375 (VDSPELKEAL…TVRCQALDMM (104 aa)) is the Cystatin kininogen-type 3 domain. N-linked (GlcNAc...) asparagine glycosylation is present at Asn-326. The tract at residues 410–430 (LSKAGAGPAPDHQAEASTVTP) is disordered.

As T-kinin is preceded by a Met instead of an Arg or Lys, it is not released from its precursor by either tissue or plasma kallikrein. As to expression, plasma.

It is found in the secreted. The protein resides in the extracellular space. Functionally, kininogens are plasma glycoproteins with a number of functions: (1) as precursor of the active peptide bradykinin they effect smooth muscle contraction, induction of hypotension and increase of vascular permeability. (2) They play a role in blood coagulation by helping to position optimally prekallikrein and factor XI next to factor XII. (3) They are inhibitor of thiol proteases. The chain is T-kininogen 2 from Rattus norvegicus (Rat).